We begin with the raw amino-acid sequence, 78 residues long: D-alanyl carrier protein (78 aa).

The region spanning 1-77 is the Carrier domain; it reads MDLKEQIVEI…KVVAKVESLI (77 aa). Residue serine 35 is modified to O-(pantetheine 4'-phosphoryl)serine.

This sequence belongs to the DltC family. 4'-phosphopantetheine is transferred from CoA to a specific serine of apo-DCP.

It is found in the cytoplasm. The protein operates within cell wall biogenesis; lipoteichoic acid biosynthesis. Functionally, carrier protein involved in the D-alanylation of lipoteichoic acid (LTA). The loading of thioester-linked D-alanine onto DltC is catalyzed by D-alanine--D-alanyl carrier protein ligase DltA. The DltC-carried D-alanyl group is further transferred to cell membrane phosphatidylglycerol (PG) by forming an ester bond, probably catalyzed by DltD. D-alanylation of LTA plays an important role in modulating the properties of the cell wall in Gram-positive bacteria, influencing the net charge of the cell wall. This chain is D-alanyl carrier protein, found in Leuconostoc mesenteroides subsp. mesenteroides (strain ATCC 8293 / DSM 20343 / BCRC 11652 / CCM 1803 / JCM 6124 / NCDO 523 / NBRC 100496 / NCIMB 8023 / NCTC 12954 / NRRL B-1118 / 37Y).